Consider the following 389-residue polypeptide: Major outer membrane porin (389 aa).

Residues methionine 1–alanine 22 form the signal peptide.

It belongs to the chlamydial porin (CP) (TC 1.B.2) family. Part of a disulfide cross-linked outer membrane complex (COMC) composed of the major outer membrane porin (MOMP), the small cysteine-rich protein (OmcA) and the large cysteine-rich periplasmic protein (OmcB).

Its subcellular location is the cell outer membrane. In elementary bodies (EBs, the infectious stage, which is able to survive outside the host cell) provides the structural integrity of the outer envelope through disulfide cross-links with the small cysteine-rich protein and the large cysteine-rich periplasmic protein. It has been described in publications as the Sarkosyl-insoluble COMC (Chlamydia outer membrane complex), and serves as the functional equivalent of peptidoglycan. In terms of biological role, permits diffusion of specific solutes through the outer membrane. The protein is Major outer membrane porin (ompA) of Chlamydia abortus (strain DSM 27085 / S26/3) (Chlamydophila abortus).